A 348-amino-acid chain; its full sequence is D-alanine--D-alanine ligase (348 aa).

Positions 132–334 (KRVLESAGIP…YSDLIEELVS (203 aa)) constitute an ATP-grasp domain. Position 162-217 (162-217 (LETLSFPIFVKPANMGSSVGISKAESIEGLREAIALALKYDSRILIEQGVVAREIE)) interacts with ATP. Positions 288, 301, and 303 each coordinate Mg(2+).

Belongs to the D-alanine--D-alanine ligase family. It depends on Mg(2+) as a cofactor. Mn(2+) is required as a cofactor.

Its subcellular location is the cytoplasm. It carries out the reaction 2 D-alanine + ATP = D-alanyl-D-alanine + ADP + phosphate + H(+). The protein operates within cell wall biogenesis; peptidoglycan biosynthesis. Cell wall formation. The protein is D-alanine--D-alanine ligase of Streptococcus uberis (strain ATCC BAA-854 / 0140J).